We begin with the raw amino-acid sequence, 406 residues long: Leucine aminopeptidase 1 (406 aa).

Positions Met-1–Gly-18 are cleaved as a signal peptide. Residues Arg-19 to Lys-94 constitute a propeptide that is removed on maturation. Asn-186 carries an N-linked (GlcNAc...) asparagine glycan. Positions 194, 213, 252, and 279 each coordinate Zn(2+). N-linked (GlcNAc...) asparagine glycosylation is present at Asn-306. Cys-328 and Cys-332 are disulfide-bonded. His-361 is a binding site for Zn(2+).

The protein belongs to the peptidase M28 family. M28E subfamily. As to quaternary structure, monomer. Requires Zn(2+) as cofactor.

It localises to the secreted. Its function is as follows. Extracellular aminopeptidase that allows assimilation of proteinaceous substrates. The protein is Leucine aminopeptidase 1 (LAP1) of Chaetomium globosum (strain ATCC 6205 / CBS 148.51 / DSM 1962 / NBRC 6347 / NRRL 1970) (Soil fungus).